Consider the following 515-residue polypeptide: NADH-quinone oxidoreductase subunit N (515 aa).

14 helical membrane passes run 14 to 34 (ITPI…EAFL), 40 to 60 (WSAQ…ALAL), 80 to 100 (APTL…ILLI), 138 to 158 (TEVF…CAAN), 160 to 180 (LLTM…MCGL), 195 to 215 (YFLL…LLYG), 239 to 259 (LFAG…VGPF), 271 to 291 (PTAV…GGIL), 307 to 327 (GVLY…GLTQ), 333 to 353 (MIAY…IALT), 361 to 381 (MFYL…ISLV), 404 to 424 (VAWV…TSGF), 438 to 458 (GMAP…FFYL), and 485 to 505 (AAIT…SLAL).

The protein belongs to the complex I subunit 2 family. NDH-1 is composed of 14 different subunits. Subunits NuoA, H, J, K, L, M, N constitute the membrane sector of the complex.

The protein localises to the cell membrane. The catalysed reaction is a quinone + NADH + 5 H(+)(in) = a quinol + NAD(+) + 4 H(+)(out). Its function is as follows. NDH-1 shuttles electrons from NADH, via FMN and iron-sulfur (Fe-S) centers, to quinones in the respiratory chain. The immediate electron acceptor for the enzyme in this species is believed to be a menaquinone. Couples the redox reaction to proton translocation (for every two electrons transferred, four hydrogen ions are translocated across the cytoplasmic membrane), and thus conserves the redox energy in a proton gradient. This Saccharopolyspora erythraea (strain ATCC 11635 / DSM 40517 / JCM 4748 / NBRC 13426 / NCIMB 8594 / NRRL 2338) protein is NADH-quinone oxidoreductase subunit N.